The following is a 146-amino-acid chain: MLLQGTHRIGRMAMLLALADENESPVLSIPKGWKYCTGKVGSMNSQKVVAAMETAAKSNRVIETDVYRETHALYHAIMEALYGVTRGQIQLADVLRTVGLRFAIVRGTPYDGKKEGEWVAVALYGTIGAPVKGSEHEAIGLGINHI.

This sequence belongs to the HutP family. As to quaternary structure, homohexamer.

In terms of biological role, antiterminator that binds to cis-acting regulatory sequences on the mRNA in the presence of histidine, thereby suppressing transcription termination and activating the hut operon for histidine utilization. This chain is Hut operon positive regulatory protein, found in Bacillus mycoides (strain KBAB4) (Bacillus weihenstephanensis).